Reading from the N-terminus, the 929-residue chain is Probable LRR receptor-like serine/threonine-protein kinase At1g67720 (929 aa).

An N-terminal signal peptide occupies residues 1–21 (MGLCLAQLAVTCLFLVPFVLS). The Extracellular portion of the chain corresponds to 22–531 (QVTEFVSIDC…NEAQRKHFWQ (510 aa)). N-linked (GlcNAc...) asparagine glycans are attached at residues Asn-36, Asn-173, Asn-236, Asn-293, Asn-320, Asn-332, and Asn-407. 4 LRR repeats span residues 413 to 437 (PPRV…INYM), 438 to 460 (EALT…MSKL), 461 to 484 (VNLK…LAHL), and 485 to 508 (PNLQ…LLKG). Residue Asn-494 is glycosylated (N-linked (GlcNAc...) asparagine). Residues 532-552 (ILGISIAAVAILLLLVGGSLV) form a helical membrane-spanning segment. The Cytoplasmic segment spans residues 553–929 (LLCALRKTKR…SRNSLAPAAR (377 aa)). Residues 606-880 (DNFSKKVGRG…EVIVAIQDAI (275 aa)) enclose the Protein kinase domain. Residues 612 to 620 (VGRGSFGSV) and Lys-634 contribute to the ATP site. Phosphotyrosine is present on Tyr-679. Catalysis depends on Asp-731, which acts as the Proton acceptor. Residues Ser-735 and Ser-764 each carry the phosphoserine modification. Thr-770 carries the post-translational modification Phosphothreonine. Tyr-778 carries the post-translational modification Phosphotyrosine.

This sequence belongs to the protein kinase superfamily. Ser/Thr protein kinase family.

It localises to the membrane. It catalyses the reaction L-seryl-[protein] + ATP = O-phospho-L-seryl-[protein] + ADP + H(+). The catalysed reaction is L-threonyl-[protein] + ATP = O-phospho-L-threonyl-[protein] + ADP + H(+). In Arabidopsis thaliana (Mouse-ear cress), this protein is Probable LRR receptor-like serine/threonine-protein kinase At1g67720.